The primary structure comprises 111 residues: Propane 2-monooxygenase, effector component (111 aa).

It belongs to the TmoD/XamoD family. As to quaternary structure, the propane 2-monooxygenase multicomponent enzyme system is composed of an electron transfer component and a monooxygenase component interacting with the effector protein PrmD. The electron transfer component is composed of a reductase (PrmB), and the monooxygenase component is formed by a large subunit (PrmA) and a small subunit (PrmC).

Functionally, effector component of the propane 2-monooxygenase multicomponent enzyme system which is involved in the degradation of propane via the O2-dependent hydroxylation of propane. This is Propane 2-monooxygenase, effector component from Gordonia sp. (strain TY-5).